The sequence spans 267 residues: Undecaprenyl-diphosphatase (267 aa).

The next 8 helical transmembrane spans lie at Ile4 to Ser24, Asn41 to Phe61, Ile84 to Phe104, Tyr116 to Leu136, Cys160 to Leu180, Tyr185 to Leu205, Glu216 to Gly236, and Thr246 to Cys266.

Belongs to the UppP family.

It localises to the cell membrane. It catalyses the reaction di-trans,octa-cis-undecaprenyl diphosphate + H2O = di-trans,octa-cis-undecaprenyl phosphate + phosphate + H(+). Its function is as follows. Catalyzes the dephosphorylation of undecaprenyl diphosphate (UPP). Confers resistance to bacitracin. The chain is Undecaprenyl-diphosphatase from Wigglesworthia glossinidia brevipalpis.